Reading from the N-terminus, the 338-residue chain is DNA-directed RNA polymerase subunit alpha (338 aa).

Residues 1 to 234 (MIQKNWQELI…DQLQLFINFE (234 aa)) form an alpha N-terminal domain (alpha-NTD) region. The interval 250 to 338 (FNKNLLRKVD…ELAKKLEEPY (89 aa)) is alpha C-terminal domain (alpha-CTD).

It belongs to the RNA polymerase alpha chain family. As to quaternary structure, homodimer. The RNAP catalytic core consists of 2 alpha, 1 beta, 1 beta' and 1 omega subunit. When a sigma factor is associated with the core the holoenzyme is formed, which can initiate transcription.

It catalyses the reaction RNA(n) + a ribonucleoside 5'-triphosphate = RNA(n+1) + diphosphate. Its function is as follows. DNA-dependent RNA polymerase catalyzes the transcription of DNA into RNA using the four ribonucleoside triphosphates as substrates. This is DNA-directed RNA polymerase subunit alpha from Paramagnetospirillum magneticum (strain ATCC 700264 / AMB-1) (Magnetospirillum magneticum).